We begin with the raw amino-acid sequence, 440 residues long: Putative short-chain fatty acid transporter (440 aa).

At 1 to 19 (MIGRISRFMTRFVSRWLPD) the chain is on the periplasmic side. The helical transmembrane segment at 20-40 (PLIFAMLLTLLTFVIALWLTP) threads the bilayer. Residues 41–53 (QTPISMVKMWGDG) are Cytoplasmic-facing. A helical membrane pass occupies residues 54-74 (FWNLLAFGMQMALIIVTGHAL). At 75-102 (ASSAPVKSLLRTAASAAKTPVQGVMLVT) the chain is on the periplasmic side. A helical transmembrane segment spans residues 103-123 (FFGSVACVINWGFGLVVGAMF). Residues 124–137 (AREVARRVPGSDYP) are Cytoplasmic-facing. 2 consecutive transmembrane segments (helical) span residues 138–158 (LLIACAYIGFLTWGGGFSGSM) and 159–179 (PLLAATPGNPVEHIAGLIPVG). Position 180 (aspartate 180) is a topological domain, cytoplasmic. The chain crosses the membrane as a helical span at residues 181 to 201 (TLFSGFNIFITVALIVVMPFI). The Periplasmic segment spans residues 202–244 (TRMMMPKPSDVVSIDPKLLMEEADFQKQLPKDAPPSERLEESR). The next 2 membrane-spanning stretches (helical) occupy residues 245–265 (ILTLIIGALGIAYLAMYFSEH) and 266–286 (GFNITINTVNLMFMIAGLLLH). The Periplasmic portion of the chain corresponds to 287–313 (KTPMAYMRAISAAARSTAGILVQFPFY). Residues 314–334 (AGIQLMMEHSGLGGLITEFFI) form a helical membrane-spanning segment. Residues 335–351 (NVANKDTFPVMTFFSSA) lie on the Cytoplasmic side of the membrane. Residues 352 to 372 (LINFAVPSGGGHWVIQGPFVI) form a helical membrane-spanning segment. The Periplasmic segment spans residues 373–394 (PAAQALGADLGKSVMAIAYGEQ). A helical membrane pass occupies residues 395-415 (WMNMAQPFWALPALAIAGLGV). At 416–419 (RDIM) the chain is on the cytoplasmic side. Residues 420-440 (GYCITALLFSGVIFVIGLTLF) traverse the membrane as a helical segment.

It is found in the cell inner membrane. In terms of biological role, may be responsible for the uptake of short-chain fatty acids. The polypeptide is Putative short-chain fatty acid transporter (atoE) (Escherichia coli (strain K12)).